We begin with the raw amino-acid sequence, 138 residues long: Basic phospholipase A2 Mtx-b (138 aa).

A signal peptide spans 1–16 (MRALWIVAVLLVGVEG). Intrachain disulfides connect cysteine 42–cysteine 131, cysteine 44–cysteine 60, cysteine 59–cysteine 111, cysteine 65–cysteine 138, cysteine 66–cysteine 104, cysteine 73–cysteine 97, and cysteine 91–cysteine 102. Residues tyrosine 43, glycine 45, and glycine 47 each coordinate Ca(2+). Histidine 63 is an active-site residue. Aspartate 64 is a binding site for Ca(2+). Aspartate 105 is a catalytic residue.

As to quaternary structure, heterodimer of an acidic subunit and a basic chain. The acidic subunit is non-toxic, without enzymatic activity and comprises 3 peptides that are cross-linked by 7 disulfide bridges. The basic subunit is toxic, has phospholipase A2 activity and is composed of a single chain. Ca(2+) is required as a cofactor. As to expression, expressed by the venom gland.

It is found in the secreted. The enzyme catalyses a 1,2-diacyl-sn-glycero-3-phosphocholine + H2O = a 1-acyl-sn-glycero-3-phosphocholine + a fatty acid + H(+). Functionally, snake venom phospholipase A2 (PLA2) that inhibits neuromuscular transmission by blocking acetylcholine release from the nerve termini. PLA2 catalyzes the calcium-dependent hydrolysis of the 2-acyl groups in 3-sn-phosphoglycerides. This chain is Basic phospholipase A2 Mtx-b, found in Crotalus scutulatus scutulatus (Mojave rattlesnake).